The following is a 199-amino-acid chain: HTH-type transcriptional repressor NemR (199 aa).

Residues 7 to 67 (HDTREHLLAT…AMLERHYAAY (61 aa)) form the HTH tetR-type domain. A DNA-binding region (H-T-H motif) is located at residues 30–49 (GLSELLKTAEVPKGSFYHYF).

Involved in response to both electrophiles and reactive chlorine species (RCS). Represses the transcription of the nemRA-gloA operon by binding to the NemR box. This is HTH-type transcriptional repressor NemR (nemR) from Escherichia coli O6:H1 (strain CFT073 / ATCC 700928 / UPEC).